Reading from the N-terminus, the 466-residue chain is Ribulose bisphosphate carboxylase (466 aa).

Residue N111 participates in substrate binding. K166 functions as the Proton acceptor in the catalytic mechanism. K168 is a substrate binding site. Residues K191, D193, and E194 each contribute to the Mg(2+) site. At K191 the chain carries N6-carboxylysine. Catalysis depends on H287, which acts as the Proton acceptor. Substrate is bound by residues R288, H321, and S368.

It belongs to the RuBisCO large chain family. Type II subfamily. As to quaternary structure, homodimer. Requires Mg(2+) as cofactor.

The enzyme catalyses 2 (2R)-3-phosphoglycerate + 2 H(+) = D-ribulose 1,5-bisphosphate + CO2 + H2O. The catalysed reaction is D-ribulose 1,5-bisphosphate + O2 = 2-phosphoglycolate + (2R)-3-phosphoglycerate + 2 H(+). Its function is as follows. RuBisCO catalyzes two reactions: the carboxylation of D-ribulose 1,5-bisphosphate, the primary event in carbon dioxide fixation, as well as the oxidative fragmentation of the pentose substrate. Both reactions occur simultaneously and in competition at the same active site. In Rhodospirillum rubrum, this protein is Ribulose bisphosphate carboxylase (cbbM).